Reading from the N-terminus, the 340-residue chain is uncharacterized protein (340 aa).

A compositionally biased stretch (basic and acidic residues) spans 193–207 (KELPKEKKKSDGDKT). The interval 193 to 340 (KELPKEKKKS…FIPLQPKKKI (148 aa)) is disordered. Residues 217–228 (FFGFWGHSGSKS) are compositionally biased toward low complexity. Basic and acidic residues predominate over residues 235-244 (EKPIEAKNEI). Polar residues-rich tracts occupy residues 263 to 279 (SDKN…SDQQ) and 307 to 328 (PAQS…SLTL).

This is an uncharacterized protein from Saccharomyces cerevisiae (strain ATCC 204508 / S288c) (Baker's yeast).